A 392-amino-acid chain; its full sequence is V-type proton ATPase subunit C (392 aa).

An N-acetylalanine modification is found at A2.

Belongs to the V-ATPase C subunit family. V-ATPase is a heteromultimeric enzyme composed of a peripheral catalytic V1 complex (components A to H) attached to an integral membrane V0 proton pore complex (components: a, c, c', c'', d, e, f and VOA1). Interacts directly with VMA4.

Its subcellular location is the vacuole membrane. Subunit of the V1 complex of vacuolar(H+)-ATPase (V-ATPase), a multisubunit enzyme composed of a peripheral complex (V1) that hydrolyzes ATP and a membrane integral complex (V0) that translocates protons. V-ATPase is responsible for acidifying and maintaining the pH of intracellular compartments. Subunit C is necessary for the assembly of the catalytic sector of the enzyme and is likely to have a specific function in its catalytic activity. Reversibly leaves the enzyme after glucose depletion, causing the catalytic subcomplex V1 to detach from the V0 section. The polypeptide is V-type proton ATPase subunit C (Saccharomyces cerevisiae (strain ATCC 204508 / S288c) (Baker's yeast)).